A 78-amino-acid chain; its full sequence is Defensin-like protein 201 (78 aa).

The first 22 residues, M1–A22, serve as a signal peptide directing secretion. 4 cysteine pairs are disulfide-bonded: C32–C78, C41–C61, C46–C71, and C50–C73.

The protein belongs to the DEFL family.

The protein localises to the secreted. This Arabidopsis thaliana (Mouse-ear cress) protein is Defensin-like protein 201.